The chain runs to 265 residues: Capsule polysaccharide export inner-membrane protein BexB (265 aa).

A run of 6 helical transmembrane segments spans residues I37–W57, K64–W84, V121–I141, F148–I168, F178–F198, and E235–V255. One can recognise an ABC transmembrane type-2 domain in the interval I37–F258.

The protein belongs to the ABC-2 integral membrane protein family.

The protein resides in the cell inner membrane. May form an ATP-driven capsule polysaccharide export apparatus, in association with the BexA, BexC and BexD proteins. This chain is Capsule polysaccharide export inner-membrane protein BexB (bexB), found in Haemophilus influenzae.